The primary structure comprises 218 residues: Ribose-5-phosphate isomerase A (218 aa).

Substrate is bound by residues 28-31, 81-84, and 94-97; these read TGST, DGAD, and KGGG. Glu-103 functions as the Proton acceptor in the catalytic mechanism. Residue Lys-121 participates in substrate binding.

This sequence belongs to the ribose 5-phosphate isomerase family. As to quaternary structure, homodimer.

The enzyme catalyses aldehydo-D-ribose 5-phosphate = D-ribulose 5-phosphate. Its pathway is carbohydrate degradation; pentose phosphate pathway; D-ribose 5-phosphate from D-ribulose 5-phosphate (non-oxidative stage): step 1/1. Catalyzes the reversible conversion of ribose-5-phosphate to ribulose 5-phosphate. This chain is Ribose-5-phosphate isomerase A, found in Thioalkalivibrio sulfidiphilus (strain HL-EbGR7).